Reading from the N-terminus, the 526-residue chain is Serine/threonine-protein kinase ppk22 (526 aa).

Disordered regions lie at residues 1-24 (MARETEFNDKSPSSTDDGMSQSHF) and 39-106 (AATV…PRPL). Polar residues predominate over residues 10–23 (KSPSSTDDGMSQSH). The span at 65–78 (NQLNELDLNDSSDQ) shows a compositional bias: low complexity. Ser-154 is subject to Phosphoserine. The Protein kinase domain occupies 155-445 (FEKIRLLGQG…ASDIKQHPFF (291 aa)). Residues 161–169 (LGQGDVGKV) and Lys-184 each bind ATP. Asp-280 (proton acceptor) is an active-site residue. Position 339 is a phosphothreonine (Thr-339). At Ser-341 the chain carries Phosphoserine. Tyr-348 is modified (phosphotyrosine). The region spanning 446 to 526 (RHIQWALLRS…SVTLHHAGDE (81 aa)) is the AGC-kinase C-terminal domain. The tract at residues 499–526 (MHSSTPVNEQSNPFDSFSSVTLHHAGDE) is disordered. A compositionally biased stretch (polar residues) spans 500–519 (HSSTPVNEQSNPFDSFSSVT).

It belongs to the protein kinase superfamily. AGC Ser/Thr protein kinase family.

Its subcellular location is the cytoplasm. It carries out the reaction L-seryl-[protein] + ATP = O-phospho-L-seryl-[protein] + ADP + H(+). It catalyses the reaction L-threonyl-[protein] + ATP = O-phospho-L-threonyl-[protein] + ADP + H(+). The protein is Serine/threonine-protein kinase ppk22 (ppk22) of Schizosaccharomyces pombe (strain 972 / ATCC 24843) (Fission yeast).